A 340-amino-acid chain; its full sequence is Protein SSUH2 homolog (340 aa).

The segment covering methionine 1 to methionine 11 has biased composition (acidic residues). The tract at residues methionine 1–serine 20 is disordered.

Widely expressed, with highest levels in the liver, intestine, tongue and underjaw.

It localises to the cytoplasm. The protein localises to the nucleus. Its function is as follows. Plays a role in odontogenesis. The protein is Protein SSUH2 homolog of Mus musculus (Mouse).